The sequence spans 749 residues: DNA topoisomerase 1 (749 aa).

The segment at 1–110 is disordered; the sequence is MSDSEDVALS…PKKEDSVETD (110 aa). Positions 62–75 are enriched in basic and acidic residues; it reads LSKEKVNNKVKDEL. Over residues 79-94 the composition is skewed to low complexity; sequence PVTPKKTPKISKTPVS. Residues 101–110 show a composition bias toward basic and acidic residues; that stretch reads PKKEDSVETD. Interaction with DNA stretches follow at residues 338–339, 401–406, and 493–495; these read KY, RAGGEK, and TAK. Positions 345-749 constitute a Topo IB-type catalytic domain; it reads NSSIKGISDM…IESTDENWRF (405 aa). The active-site O-(3'-phospho-DNA)-tyrosine intermediate is the Tyr-707.

Belongs to the type IB topoisomerase family.

It is found in the nucleus. The protein resides in the nucleolus. Its subcellular location is the nucleoplasm. It catalyses the reaction ATP-independent breakage of single-stranded DNA, followed by passage and rejoining.. Releases the supercoiling and torsional tension of DNA introduced during the DNA replication and transcription by transiently cleaving and rejoining one strand of the DNA duplex. Introduces a single-strand break via transesterification at the specific target site 5'-[CT]CCTTp site in duplex DNA. The scissile phosphodiester is attacked by the catalytic tyrosine of the enzyme, resulting in the formation of a DNA-(3'-phosphotyrosyl)-enzyme intermediate and the expulsion of a 5'-OH DNA strand. The free DNA strand then undergoes passage around the unbroken strand thus removing DNA supercoils. Finally, in the religation step, the DNA 5'-OH attacks the covalent intermediate to expel the active-site tyrosine and restore the DNA phosphodiester backbone. The polypeptide is DNA topoisomerase 1 (TOP1) (Candidozyma auris (Yeast)).